A 256-amino-acid chain; its full sequence is Ribosomal RNA small subunit methyltransferase A (256 aa).

Residues H12, L14, G39, E60, D81, and N103 each contribute to the S-adenosyl-L-methionine site.

This sequence belongs to the class I-like SAM-binding methyltransferase superfamily. rRNA adenine N(6)-methyltransferase family. RsmA subfamily.

Its subcellular location is the cytoplasm. The enzyme catalyses adenosine(1518)/adenosine(1519) in 16S rRNA + 4 S-adenosyl-L-methionine = N(6)-dimethyladenosine(1518)/N(6)-dimethyladenosine(1519) in 16S rRNA + 4 S-adenosyl-L-homocysteine + 4 H(+). Functionally, specifically dimethylates two adjacent adenosines (A1518 and A1519) in the loop of a conserved hairpin near the 3'-end of 16S rRNA in the 30S particle. May play a critical role in biogenesis of 30S subunits. The polypeptide is Ribosomal RNA small subunit methyltransferase A (Methylibium petroleiphilum (strain ATCC BAA-1232 / LMG 22953 / PM1)).